The following is a 428-amino-acid chain: MSYLVTIIAFIIVFGVLVTVHEYGHMFFAKRAGIMCPEFAIGMGPKIFSFRKNETLYTIRLLPVGGYVRMAGDGLEEPPVEPGMNVKIKLNEENEITHIILDDHHKFQQIEAIEVKKCDFKDDLFIEGITAYDNERHHFKIARKSFFVENGSLVQIAPRDRQFAHKKPWPKFLTLFAGPLFNFILALVLFIGLAYYQGTPTSTVEQVADKYPAQQAGLQKGDKIVQIGKYKISEFDDVDKALDKVKDNKTTVKFERDGKTKSVELTPKKTERKLTKVSSETKYVLGFQPASEHTLFKPIVYGFESFLKGSTLIFTAVVGMLASIFTGGFSFDMLNGPVGIYHNVDSVVKAGIISLIGYTALLSVNLGIMNLIPIPALDGGRILFVIYEAIFRKPVNKKAETTIIAIGAIFMVVIMILVTWNDIRRYFL.

H21 serves as a coordination point for Zn(2+). The active site involves E22. Position 25 (H25) interacts with Zn(2+). 4 helical membrane-spanning segments follow: residues 172 to 194 (FLTL…IGLA), 309 to 331 (GSTL…GFSF), 352 to 374 (IISL…LIPI), and 401 to 420 (TTII…LVTW). Residues 186–269 (ALVLFIGLAY…TKSVELTPKK (84 aa)) form the PDZ domain.

This sequence belongs to the peptidase M50B family. Requires Zn(2+) as cofactor.

It is found in the cell membrane. In Staphylococcus aureus (strain N315), this protein is Putative zinc metalloprotease SA1105.